Reading from the N-terminus, the 300-residue chain is Urease accessory protein UreD (300 aa).

The protein belongs to the UreD family. UreD, UreF and UreG form a complex that acts as a GTP-hydrolysis-dependent molecular chaperone, activating the urease apoprotein by helping to assemble the nickel containing metallocenter of UreC. The UreE protein probably delivers the nickel.

Its subcellular location is the cytoplasm. Functionally, required for maturation of urease via the functional incorporation of the urease nickel metallocenter. In Prochlorococcus marinus (strain MIT 9312), this protein is Urease accessory protein UreD.